Reading from the N-terminus, the 116-residue chain is Ig heavy chain V region 441 (116 aa).

The signal sequence occupies residues 1-18 (MDFGLIFFIVALLKGVQC). Residues 19-116 (EVKLLESGGG…EDTALYYCAR (98 aa)) enclose the Ig-like domain.

The chain is Ig heavy chain V region 441 from Mus musculus (Mouse).